The following is a 302-amino-acid chain: Urease accessory protein UreD 2 (302 aa).

This sequence belongs to the UreD family. As to quaternary structure, ureD, UreF and UreG form a complex that acts as a GTP-hydrolysis-dependent molecular chaperone, activating the urease apoprotein by helping to assemble the nickel containing metallocenter of UreC. The UreE protein probably delivers the nickel.

The protein resides in the cytoplasm. In terms of biological role, required for maturation of urease via the functional incorporation of the urease nickel metallocenter. This chain is Urease accessory protein UreD 2, found in Brucella melitensis biotype 1 (strain ATCC 23456 / CCUG 17765 / NCTC 10094 / 16M).